Consider the following 672-residue polypeptide: Glycogen [starch] synthase (672 aa).

A UDP-alpha-D-glucose-binding site is contributed by K56. Residues 645-672 (MRDNEGKVPSAATSRRPSIHSSDGEDDE) form a disordered region. Over residues 655–665 (AATSRRPSIHS) the composition is skewed to polar residues.

Belongs to the glycosyltransferase 3 family. As to quaternary structure, forms a hetero-octamer with each protomer of the gsy-1 homotetramer bound to one molecule of gyg-1. The N-terminus is involved in interprotomer contacts with gyg-1. The interaction with gyg-1 is required for glycogen production but is not required for gsy-1 intrinsic activity.

It carries out the reaction [(1-&gt;4)-alpha-D-glucosyl](n) + UDP-alpha-D-glucose = [(1-&gt;4)-alpha-D-glucosyl](n+1) + UDP + H(+). Its pathway is glycan biosynthesis; glycogen biosynthesis. Its function is as follows. Transfers the glycosyl residue from UDP-Glc to the non-reducing end of alpha-1,4-glucan. This Caenorhabditis elegans protein is Glycogen [starch] synthase.